The sequence spans 208 residues: Guanylate kinase (208 aa).

A Guanylate kinase-like domain is found at 3 to 181; sequence GSLFIITAAS…ALTELKAIIV (179 aa). 10-17 is an ATP binding site; the sequence is AASGTGKT.

It belongs to the guanylate kinase family.

Its subcellular location is the cytoplasm. The catalysed reaction is GMP + ATP = GDP + ADP. In terms of biological role, essential for recycling GMP and indirectly, cGMP. This chain is Guanylate kinase, found in Psychrobacter arcticus (strain DSM 17307 / VKM B-2377 / 273-4).